Consider the following 253-residue polypeptide: MKKVLIAGGNGVIGRLLAEGLISDYEVTVLDKDHFDGKASSIQADAANYEELLKKIPKDTDAILNLLAVKIKYDIMDIAEFEKMTDVFYRASYYLCRAAAELGIQKLVFASSNHVTDVYEKDGRSLLGREITTSDYPLSKNLYGVLKLTSEQIGHLFYLENKLSVINLRIGTVVTDEMDTLHEKERTKKTLLSHPDLLSIFKAAIETNIRYGTYYAVSDNPGRPWSIESAVNELGFSPQINTAELLNEEENGA.

It belongs to the NAD(P)-dependent epimerase/dehydratase family.

This is an uncharacterized protein from Bacillus subtilis (strain 168).